Here is a 220-residue protein sequence, read N- to C-terminus: WAP four-disulfide core domain protein 1 (220 aa).

An N-terminal signal peptide occupies residues 1–31 (MPLTGVGPGSCRRQIIRALCLLLLLLHAGSA). The tract at residues 46–70 (KSRAEEAGAPGGPRQPRADRCPPPP) is disordered. One can recognise a WAP domain in the interval 59-108 (RQPRADRCPPPPRTLPPGACQAARCQADSECPRHRRCCYNGCAYACLEAV). 4 disulfide bridges follow: Cys-66/Cys-96, Cys-78/Cys-100, Cys-83/Cys-95, and Cys-89/Cys-104. Positions 199–220 (EYPEGDSKNVAEPGRGQQKHFQ) are disordered.

Its subcellular location is the secreted. In terms of biological role, has growth inhibitory activity. This is WAP four-disulfide core domain protein 1 (WFDC1) from Homo sapiens (Human).